Here is a 209-residue protein sequence, read N- to C-terminus: Large ribosomal subunit protein uL3 (209 aa).

The tract at residues T133–P152 is disordered. Q150 bears the N5-methylglutamine mark.

Belongs to the universal ribosomal protein uL3 family. In terms of assembly, part of the 50S ribosomal subunit. Forms a cluster with proteins L14 and L19. Post-translationally, methylated by PrmB.

Its function is as follows. One of the primary rRNA binding proteins, it binds directly near the 3'-end of the 23S rRNA, where it nucleates assembly of the 50S subunit. This Yersinia enterocolitica serotype O:8 / biotype 1B (strain NCTC 13174 / 8081) protein is Large ribosomal subunit protein uL3.